We begin with the raw amino-acid sequence, 344 residues long: Phenylalanine--tRNA ligase alpha subunit (344 aa).

Residue E257 coordinates Mg(2+).

Belongs to the class-II aminoacyl-tRNA synthetase family. Phe-tRNA synthetase alpha subunit type 1 subfamily. In terms of assembly, tetramer of two alpha and two beta subunits. Mg(2+) is required as a cofactor.

It localises to the cytoplasm. It catalyses the reaction tRNA(Phe) + L-phenylalanine + ATP = L-phenylalanyl-tRNA(Phe) + AMP + diphosphate + H(+). This chain is Phenylalanine--tRNA ligase alpha subunit, found in Chlorobium chlorochromatii (strain CaD3).